The sequence spans 519 residues: Putative ATP-dependent RNA helicase L396 (519 aa).

The Helicase ATP-binding domain occupies 110–258 (IKGMEEGGGG…IINWYMGPIL (149 aa)). 123 to 130 (MGCGSGKT) is an ATP binding site. The DEAH box signature appears at 211–214 (DEVH). The 141-residue stretch at 317-457 (YLIQELFDMG…KQKYNIQKYY (141 aa)) folds into the Helicase C-terminal domain.

Belongs to the DEAD box helicase family. DEAH subfamily.

It carries out the reaction ATP + H2O = ADP + phosphate + H(+). The chain is Putative ATP-dependent RNA helicase L396 from Acanthamoeba polyphaga (Amoeba).